The sequence spans 307 residues: Ribonuclease Z (307 aa).

Zn(2+) is bound by residues H62, H64, D66, H67, H139, D210, and H268. D66 serves as the catalytic Proton acceptor.

This sequence belongs to the RNase Z family. Homodimer. Zn(2+) is required as a cofactor.

It carries out the reaction Endonucleolytic cleavage of RNA, removing extra 3' nucleotides from tRNA precursor, generating 3' termini of tRNAs. A 3'-hydroxy group is left at the tRNA terminus and a 5'-phosphoryl group is left at the trailer molecule.. Zinc phosphodiesterase, which displays some tRNA 3'-processing endonuclease activity. Probably involved in tRNA maturation, by removing a 3'-trailer from precursor tRNA. This Myxococcus xanthus (strain DK1622) protein is Ribonuclease Z.